The primary structure comprises 449 residues: Lipase (449 aa).

Positions 1-23 (MGVFDYKNLGTEASKTLFADATA) are cleaved as a signal peptide. The disordered stretch occupies residues 58-77 (RQHRLPGSDPPAFPGILTRK). Catalysis depends on Ser206, which acts as the Charge relay system. Residues Gly318, Asp387, and Asp396 each coordinate Ca(2+). Hemolysin-type calcium-binding repeat units lie at residues 372-389 (IGSD…ADFI) and 390-407 (EGGK…HNTF).

This sequence belongs to the AB hydrolase superfamily. Lipase family.

The catalysed reaction is a triacylglycerol + H2O = a diacylglycerol + a fatty acid + H(+). This is Lipase from Pseudomonas fluorescens.